We begin with the raw amino-acid sequence, 469 residues long: Glutamate--tRNA ligase (469 aa).

Residues 9–19 (PSPTGMFHVGG) carry the 'HIGH' region motif. The Zn(2+) site is built by Cys100, Cys102, Cys122, and Asp124. Residues 232–236 (KLSKR) carry the 'KMSKS' region motif. An ATP-binding site is contributed by Lys235.

Belongs to the class-I aminoacyl-tRNA synthetase family. Glutamate--tRNA ligase type 1 subfamily. Monomer. Zn(2+) serves as cofactor.

It is found in the cytoplasm. It carries out the reaction tRNA(Glu) + L-glutamate + ATP = L-glutamyl-tRNA(Glu) + AMP + diphosphate. Catalyzes the attachment of glutamate to tRNA(Glu) in a two-step reaction: glutamate is first activated by ATP to form Glu-AMP and then transferred to the acceptor end of tRNA(Glu). The sequence is that of Glutamate--tRNA ligase from Salinispora arenicola (strain CNS-205).